Reading from the N-terminus, the 558-residue chain is Magnesium-chelatase 60 kDa subunit (558 aa).

Disordered stretches follow at residues 234 to 268 and 298 to 325; these read MPAS…GEEM and MARG…MGRL. A compositionally biased stretch (acidic residues) spans 240 to 254; the sequence is APPEPEPEPPEDQPD. Residues 298-308 show a composition bias toward low complexity; sequence MARGATGTGSA. Residues 376–555 form the VWFA domain; that stretch reads VLIFAVDASG…HKLSNVLGAA (180 aa).

Belongs to the Mg-chelatase subunits D/I family.

It carries out the reaction protoporphyrin IX + Mg(2+) + ATP + H2O = Mg-protoporphyrin IX + ADP + phosphate + 3 H(+). It functions in the pathway porphyrin-containing compound metabolism; bacteriochlorophyll biosynthesis. Functionally, involved in bacteriochlorophyll biosynthesis; introduces a magnesium ion into protoporphyrin IX to yield Mg-protoporphyrin IX. The protein is Magnesium-chelatase 60 kDa subunit (bchD) of Cereibacter sphaeroides (strain ATCC 17023 / DSM 158 / JCM 6121 / CCUG 31486 / LMG 2827 / NBRC 12203 / NCIMB 8253 / ATH 2.4.1.) (Rhodobacter sphaeroides).